A 287-amino-acid polypeptide reads, in one-letter code: Polyamine aminopropyltransferase (287 aa).

Residues 5-238 (EIWYETLHAN…GIMTFAWASQ (234 aa)) form the PABS domain. S-methyl-5'-thioadenosine is bound at residue Q33. Residues H64 and D88 each contribute to the spermidine site. Residues E108 and 140-141 (DG) contribute to the S-methyl-5'-thioadenosine site. Catalysis depends on D158, which acts as the Proton acceptor. Position 158–161 (158–161 (DCTD)) interacts with spermidine. P165 lines the S-methyl-5'-thioadenosine pocket.

Belongs to the spermidine/spermine synthase family. Homodimer or homotetramer.

The protein resides in the cytoplasm. It catalyses the reaction S-adenosyl 3-(methylsulfanyl)propylamine + putrescine = S-methyl-5'-thioadenosine + spermidine + H(+). The protein operates within amine and polyamine biosynthesis; spermidine biosynthesis; spermidine from putrescine: step 1/1. Catalyzes the irreversible transfer of a propylamine group from the amino donor S-adenosylmethioninamine (decarboxy-AdoMet) to putrescine (1,4-diaminobutane) to yield spermidine. The protein is Polyamine aminopropyltransferase of Serratia proteamaculans (strain 568).